The chain runs to 435 residues: Trigger factor (435 aa).

In terms of domain architecture, PPIase FKBP-type spans 163–248 (GELASVTFSA…VHAVKERKMP (86 aa)).

Belongs to the FKBP-type PPIase family. Tig subfamily.

It is found in the cytoplasm. It catalyses the reaction [protein]-peptidylproline (omega=180) = [protein]-peptidylproline (omega=0). In terms of biological role, involved in protein export. Acts as a chaperone by maintaining the newly synthesized protein in an open conformation. Functions as a peptidyl-prolyl cis-trans isomerase. The sequence is that of Trigger factor from Maridesulfovibrio salexigens (strain ATCC 14822 / DSM 2638 / NCIMB 8403 / VKM B-1763) (Desulfovibrio salexigens).